Here is a 524-residue protein sequence, read N- to C-terminus: 2-isopropylmalate synthase (524 aa).

A Pyruvate carboxyltransferase domain is found at 12 to 274 (VIIFDTTLRD…WNRIETTMLT (263 aa)). Asp-21, His-209, His-211, and Asn-245 together coordinate Mn(2+). The interval 398-524 (KLMSLTVIAG…EDAPAVAVAG (127 aa)) is regulatory domain.

Belongs to the alpha-IPM synthase/homocitrate synthase family. LeuA type 1 subfamily. As to quaternary structure, homodimer. Mn(2+) serves as cofactor.

The protein localises to the cytoplasm. The enzyme catalyses 3-methyl-2-oxobutanoate + acetyl-CoA + H2O = (2S)-2-isopropylmalate + CoA + H(+). The protein operates within amino-acid biosynthesis; L-leucine biosynthesis; L-leucine from 3-methyl-2-oxobutanoate: step 1/4. Functionally, catalyzes the condensation of the acetyl group of acetyl-CoA with 3-methyl-2-oxobutanoate (2-ketoisovalerate) to form 3-carboxy-3-hydroxy-4-methylpentanoate (2-isopropylmalate). The protein is 2-isopropylmalate synthase of Rhodopseudomonas palustris (strain ATCC BAA-98 / CGA009).